Consider the following 118-residue polypeptide: Large ribosomal subunit protein uL18 (118 aa).

This sequence belongs to the universal ribosomal protein uL18 family. Part of the 50S ribosomal subunit; part of the 5S rRNA/L5/L18/L25 subcomplex. Contacts the 5S and 23S rRNAs.

This is one of the proteins that bind and probably mediate the attachment of the 5S RNA into the large ribosomal subunit, where it forms part of the central protuberance. The protein is Large ribosomal subunit protein uL18 of Ralstonia pickettii (strain 12J).